A 671-amino-acid polypeptide reads, in one-letter code: Copper amine oxidase 1 (671 aa).

The N2 stretch occupies residues 3-106 (PHPLAILSEE…QHRVVGKEHH (104 aa)). The tract at residues 107–211 (ASLTLSEFDT…DRPATGGKGE (105 aa)) is N3. Residue 319–330 (AFDFGDGGGGNM) participates in substrate binding. Aspartate 321 (proton acceptor) is an active-site residue. Cysteine 340 and cysteine 366 are joined by a disulfide. Residue 402-407 (LANYEY) participates in substrate binding. Tyrosine 405 acts as the Schiff-base intermediate with substrate; via topaquinone in catalysis. Tyrosine 405 bears the 2',4',5'-topaquinone mark. Residues histidine 455 and histidine 457 each contribute to the Cu cation site. Aspartate 464 is a binding site for Mn(2+). Asparagine 471 carries an N-linked (GlcNAc...) asparagine glycan. Aspartate 606 provides a ligand contact to Mn(2+). Histidine 617 serves as a coordination point for Cu cation.

Belongs to the copper/topaquinone oxidase family. As to quaternary structure, homodimer. It depends on Cu cation as a cofactor. Zn(2+) is required as a cofactor. The cofactor is L-topaquinone. Requires Mn(2+) as cofactor. Post-translationally, topaquinone (TPQ) is generated by copper-dependent autoxidation of a specific tyrosyl residue.

The catalysed reaction is histamine + O2 + H2O = imidazole-4-acetaldehyde + H2O2 + NH4(+). The protein is Copper amine oxidase 1 (AO-I) of Aspergillus niger.